Consider the following 374-residue polypeptide: Agmatine deiminase (374 aa).

Agmatine contacts are provided by Asp220 and Asp226. Cys366 (amidino-cysteine intermediate) is an active-site residue.

Belongs to the agmatine deiminase family. As to quaternary structure, forms homodimers.

The catalysed reaction is agmatine + H2O = N-carbamoylputrescine + NH4(+). It participates in amine and polyamine biosynthesis; putrescine biosynthesis via agmatine pathway; N-carbamoylputrescine from agmatine: step 1/1. Functionally, mediates the hydrolysis of agmatine into N-carbamoylputrescine in the arginine decarboxylase (ADC) pathway of putrescine biosynthesis, a basic polyamine. In Medicago truncatula (Barrel medic), this protein is Agmatine deiminase.